A 1625-amino-acid polypeptide reads, in one-letter code: E3 ubiquitin-protein ligase KEG (1625 aa).

An RING-type zinc finger spans residues 10-56; the sequence is CSVCHTRYNEDERVPLLLQCGHGFCKDCLSKMFSTSSDTTLTCPRCR. The segment covering 91-106 has biased composition (acidic residues); sequence YTDDEDDDDEEDGSDE. Residues 91 to 110 are disordered; the sequence is YTDDEDDDDEEDGSDEDGAR. Residues 141–427 enclose the Protein kinase domain; the sequence is RQIGEESSSG…TFNAMLATFL (287 aa). Residues 147–155 and Lys176 each bind ATP; that span reads SSSGGFGGV. ANK repeat units lie at residues 467 to 496, 510 to 540, 544 to 573, 579 to 608, 612 to 641, 647 to 676, 685 to 720, 725 to 754, 758 to 787, 791 to 826, and 832 to 863; these read DNPN…AGGG, DGQS…NVDI, DGDP…NVRS, SGPS…DPNA, EGET…SRSM, KCLT…PEEI, PVGT…DPTA, HGRT…NANI, HNTI…DCNI, EGDN…AVDV, and KTVR…HLSP.

As to quaternary structure, interacts with ABI5 and EDR1. Autophosphotylated and autoubiquitinated in vitro. Post-translationally, phosphorylation enhances self-ubiquitination. In terms of processing, autoubiquitinated in response to abscisic acid (ABA) and subsequently targeted to proteolysis. Expressed in all tissues of young seedlings. In flowering plants, only detected in the youngest part of the stem, anthers and the receptacle of immature siliques. Not found in mature leave, older parts of the stem, flower parts other than anthers or mature siliques.

It localises to the golgi apparatus. It is found in the trans-Golgi network. The protein localises to the early endosome. It catalyses the reaction L-seryl-[protein] + ATP = O-phospho-L-seryl-[protein] + ADP + H(+). The catalysed reaction is L-threonyl-[protein] + ATP = O-phospho-L-threonyl-[protein] + ADP + H(+). It carries out the reaction S-ubiquitinyl-[E2 ubiquitin-conjugating enzyme]-L-cysteine + [acceptor protein]-L-lysine = [E2 ubiquitin-conjugating enzyme]-L-cysteine + N(6)-ubiquitinyl-[acceptor protein]-L-lysine.. The protein operates within protein modification; protein ubiquitination. Its function is as follows. Mediates E2-dependent protein ubiquitination. Acts as a negative regulator of abscisic acid signaling. Required for ABI5 degradation, by mediating its ubiquitination. Together with EDR1, may regulate endocytic trafficking and/or the formation of signaling complexes on trans-Golgi network (TGN)/ early endosome (EE) vesicles during stress responses. The protein is E3 ubiquitin-protein ligase KEG (KEG) of Arabidopsis thaliana (Mouse-ear cress).